A 668-amino-acid polypeptide reads, in one-letter code: MKHYSIQPANLEFNAEGTPVSRDFDDVYFSNDNGLEETRYVFLGGNHLEARFPEHPHPLFVVAESGFGTGLNFLTLWQAFDQFREAHPQAQLQRLHFISFEKFPLTRADLALAHQHWPELAPWAEQLQAQWPLPLPGCHRLLLDEGHVTLDLWFGDINELTSQLDDSLNQKVDAWFLDGFAPAKNPDMWTQNLFNAMARLARPGSTLATFTSAGFVRRGLQEAGFTMQKRKGFGRKREMLCGVMEQTLPFPCSTPWFNRMGSNKQEAAIIGGGIASALLSLALLRRGWQVTLYCADEAPALGASGNRQGALYPLLSKHDEALNRFFSNAFTFARRFYDLLPVKFDHDWCGVTQLGWDEKSQHKIAQMLSMDLPAELAVAVEANAVEQITGVATNCSGITYPQGGWLCPAELTRNVLELAQQQGLQIHYQHQLQDLSRKDDGWLLNFAGDQHATHSVVVLANGHQISGFSQTSSLPVYSVAGQVSHIPTTPELAKLKQVLCYDGYLTPQNPANQHHCIGASYHRGSEETAYSDEDQQQNRQRLIDCFPQVQWAKEVDVSGKEARCGVRCATRDHLPMVGNVPDYDATLVEYASLAEKKDEAVSAPVYDDLFMFAALGSRGLCSAPLCAEILAAQMSEEPIPMDASTLAALNPNRLWVRKLLKGKAVKAG.

Positions 1–245 are tRNA (mnm(5)s(2)U34)-methyltransferase; that stretch reads MKHYSIQPAN…KREMLCGVME (245 aa). The FAD-dependent cmnm(5)s(2)U34 oxidoreductase stretch occupies residues 270-668; it reads IGGGIASALL…LLKGKAVKAG (399 aa).

It in the N-terminal section; belongs to the methyltransferase superfamily. tRNA (mnm(5)s(2)U34)-methyltransferase family. This sequence in the C-terminal section; belongs to the DAO family. Requires FAD as cofactor.

It is found in the cytoplasm. It carries out the reaction 5-aminomethyl-2-thiouridine(34) in tRNA + S-adenosyl-L-methionine = 5-methylaminomethyl-2-thiouridine(34) in tRNA + S-adenosyl-L-homocysteine + H(+). Functionally, catalyzes the last two steps in the biosynthesis of 5-methylaminomethyl-2-thiouridine (mnm(5)s(2)U) at the wobble position (U34) in tRNA. Catalyzes the FAD-dependent demodification of cmnm(5)s(2)U34 to nm(5)s(2)U34, followed by the transfer of a methyl group from S-adenosyl-L-methionine to nm(5)s(2)U34, to form mnm(5)s(2)U34. This Escherichia coli O6:H1 (strain CFT073 / ATCC 700928 / UPEC) protein is tRNA 5-methylaminomethyl-2-thiouridine biosynthesis bifunctional protein MnmC.